The primary structure comprises 90 residues: Defensin-like protein 178 (90 aa).

The first 23 residues, 1 to 23, serve as a signal peptide directing secretion; it reads MAKATSSLVVPIIFLVIFALVEQ. Disulfide bonds link C27–C66, C36–C55, C39–C60, and C43–C62.

Belongs to the DEFL family.

It localises to the secreted. The chain is Defensin-like protein 178 (LCR64) from Arabidopsis thaliana (Mouse-ear cress).